The following is a 460-amino-acid chain: Omega-3 fatty acid desaturase, chloroplastic (460 aa).

Residues 177 to 181 (HDCGH) carry the Histidine box-1 motif. Residues 213–217 (HRTHH) carry the Histidine box-2 motif. Positions 380 to 384 (HVIHH) match the Histidine box-3 motif.

It belongs to the fatty acid desaturase type 1 family.

The protein resides in the plastid. It localises to the chloroplast membrane. Its pathway is lipid metabolism; polyunsaturated fatty acid biosynthesis. Functionally, chloroplast omega-3 fatty acid desaturase introduces the third double bond in the biosynthesis of 16:3 and 18:3 fatty acids, important constituents of plant membranes. It is thought to use ferredoxin as an electron donor and to act on fatty acids esterified to galactolipids, sulfolipids and phosphatidylglycerol. The protein is Omega-3 fatty acid desaturase, chloroplastic (FAD7A-1) of Ricinus communis (Castor bean).